The chain runs to 93 residues: Hematopoietic cell signal transducer (93 aa).

The first 18 residues, 1–18, serve as a signal peptide directing secretion; it reads MIHLGHILFLLLLPVAAA. The Extracellular segment spans residues 19–48; it reads QTTPGERSSLPAFYPGTSGSCSGCGSLSLP. A helical membrane pass occupies residues 49–69; sequence LLAGLVAADAVASLLIVGAVF. At 70 to 93 the chain is on the cytoplasmic side; that stretch reads LCARPRRSPAQEDGKVYINMPGRG. Position 86 is a phosphotyrosine (tyrosine 86). Residues 86–88 are GRB2 binding site; that stretch reads YIN. The interval 86 to 89 is PIK3R1 binding site; the sequence is YINM.

Belongs to the DAP10 family. Interacts with CLEC5A. Forms an CLEC5A/TYROBP/HCST trimolecular complex depending almost solely on TYROBP. Homodimer; Disulfide-linked. Heterohexamer composed of four subunits of HCST/DAP10 and two subunits of KLRK1. Interacts (via transmembrane domain) with KLRK1 (via transmembrane domain); the interaction is required for KLRK1 NK cell surface and induces NK cell-mediated cytotoxicity. Interacts with PIK3R1 and GRB2. Interacts with CD300H. Post-translationally, phosphorylated; PIK3R1 and GRB2 associate specifically with tyrosine-phosphorylated HCST. O-glycosylated. Predominantly expressed in hemopoietic cells such as NK cells, subset of T-cells and monocytes. Detected in leukocytes, spleen, and thymus.

The protein resides in the membrane. Transmembrane adapter protein which associates with KLRK1 to form an activation receptor KLRK1-HCST in lymphoid and myeloid cells; this receptor plays a major role in triggering cytotoxicity against target cells expressing cell surface ligands such as MHC class I chain-related MICA and MICB, and UL16-binding proteins (ULBPs); these ligands are up-regulated by stress conditions and pathological state such as viral infection and tumor transformation. Functions as a docking site for PI3-kinase PIK3R1 and GRB2. Interaction of ULBPs with KLRK1-HCST triggers calcium mobilization and activation of the PIK3R1, MAP2K/ERK, and JAK2/STAT5 signaling pathways. Both PIK3R1 and GRB2 are required for full KLRK1-HCST-mediated activation and ultimate killing of target cells. In NK cells, KLRK1-HCST signaling directly induces cytotoxicity and enhances cytokine production initiated via DAP12/TYROBP-associated receptors. In T-cells, it provides primarily costimulation for TCR-induced signals. KLRK1-HCST receptor plays a role in immune surveillance against tumors and is required for cytolysis of tumors cells; indeed, melanoma cells that do not express KLRK1 ligands escape from immune surveillance mediated by NK cells. This Homo sapiens (Human) protein is Hematopoietic cell signal transducer (HCST).